A 175-amino-acid polypeptide reads, in one-letter code: Calcineurin subunit B (175 aa).

4 EF-hand domains span residues 21–56 (AEIE…SANP), 58–88 (AKRI…FSGR), 90–125 (ETDA…MVGT), and 131–166 (QLQQ…TEVI). Asp34, Asp36, Ser38, Ser40, Glu45, Asp66, Asp68, Ser70, Asp72, Glu77, Asp103, Asp105, Asp107, Tyr109, Glu114, Asp144, Asp146, Asp148, Lys150, and Glu155 together coordinate Ca(2+).

This sequence belongs to the calcineurin regulatory subunit family. Composed of a catalytic subunit (A) and a regulatory subunit (B).

Regulatory subunit of calcineurin, a calcium-dependent, calmodulin stimulated protein phosphatase. Confers calcium sensitivity. This is Calcineurin subunit B (CNB1) from Kluyveromyces lactis (strain ATCC 8585 / CBS 2359 / DSM 70799 / NBRC 1267 / NRRL Y-1140 / WM37) (Yeast).